The sequence spans 526 residues: Probable feruloyl esterase B (526 aa).

An N-terminal signal peptide occupies residues 1–18 (MARLSLLTLLALGSAALA). Intrachain disulfides connect C27–C74 and C62–C113. N-linked (GlcNAc...) asparagine glycosylation occurs at N137. Cystine bridges form between C186–C441, C255–C272, C281–C291, and C503–C525. S187 serves as the catalytic Acyl-ester intermediate. N233 carries an N-linked (GlcNAc...) asparagine glycan. Ca(2+) is bound by residues D256, D259, A261, D263, and I265. N311 carries N-linked (GlcNAc...) asparagine glycosylation. Active-site charge relay system residues include D400 and H440. N-linked (GlcNAc...) asparagine glycosylation is present at N516.

It belongs to the tannase family.

The protein localises to the secreted. It catalyses the reaction feruloyl-polysaccharide + H2O = ferulate + polysaccharide.. Involved in degradation of plant cell walls. Hydrolyzes the feruloyl-arabinose ester bond in arabinoxylans as well as the feruloyl-galactose and feruloyl-arabinose ester bonds in pectin. The protein is Probable feruloyl esterase B (faeB) of Aspergillus clavatus (strain ATCC 1007 / CBS 513.65 / DSM 816 / NCTC 3887 / NRRL 1 / QM 1276 / 107).